We begin with the raw amino-acid sequence, 492 residues long: 2-succinylbenzoate--CoA ligase (492 aa).

Belongs to the ATP-dependent AMP-binding enzyme family. MenE subfamily.

The enzyme catalyses 2-succinylbenzoate + ATP + CoA = 2-succinylbenzoyl-CoA + AMP + diphosphate. The protein operates within quinol/quinone metabolism; 1,4-dihydroxy-2-naphthoate biosynthesis; 1,4-dihydroxy-2-naphthoate from chorismate: step 5/7. Its pathway is quinol/quinone metabolism; menaquinone biosynthesis. Its function is as follows. Converts 2-succinylbenzoate (OSB) to 2-succinylbenzoyl-CoA (OSB-CoA). The polypeptide is 2-succinylbenzoate--CoA ligase (Staphylococcus aureus (strain USA300 / TCH1516)).